Here is a 101-residue protein sequence, read N- to C-terminus: Large ribosomal subunit protein bL27 (101 aa).

Residues 1–21 (MAHKKAGGSSRNGRDSRSKRL) are disordered.

It belongs to the bacterial ribosomal protein bL27 family.

The polypeptide is Large ribosomal subunit protein bL27 (Buchnera aphidicola subsp. Cinara cedri (strain Cc)).